The sequence spans 75 residues: CDC42 small effector protein 2-B (75 aa).

Residues Cys-10 and Cys-11 are each lipidated (S-palmitoyl cysteine). Positions 29-42 constitute a CRIB domain; it reads IGEPMNFVHTAHVG.

The protein belongs to the CDC42SE/SPEC family.

The protein localises to the cytoplasm. It is found in the cytoskeleton. It localises to the cell membrane. In terms of biological role, probably involved in the organization of the actin cytoskeleton by acting downstream of CDC42, inducing actin filament assembly. The polypeptide is CDC42 small effector protein 2-B (cdc42se2-b) (Xenopus laevis (African clawed frog)).